The following is a 973-amino-acid chain: DNA repair protein rhp26 (973 aa).

Residues 35-107 (ESREIEKKRL…DIKRRLNNED (73 aa)) are a coiled coil. Residues 230–251 (RDQASASENNKDRGEFEGKDEW) are disordered. A compositionally biased stretch (basic and acidic residues) spans 238–251 (NNKDRGEFEGKDEW). A Helicase ATP-binding domain is found at 289 to 490 (WELYCQEAGG…WNLFDFVFPG (202 aa)). 302–309 (DEMGLGKT) lines the ATP pocket. The interval 367–386 (SREKRQYESDASESEAEESK) is disordered. The short motif at 441-444 (DEGH) is the DEAH box element. One can recognise a Helicase C-terminal domain in the interval 629 to 789 (VIRALLTLWK…RRFFKMTDLH (161 aa)). Disordered stretches follow at residues 803 to 846 (ETGS…KGKK), 863 to 882 (KYKP…STLG), and 930 to 973 (AVSS…KQRR). The segment covering 834-846 (DRKKHKIHDKGKK) has biased composition (basic residues). 2 stretches are compositionally biased toward polar residues: residues 868-882 (QESN…STLG) and 947-965 (STNV…SSTL).

The protein resides in the cytoplasm. It localises to the nucleus. Involved in transcription-coupled repair (TCR). This Schizosaccharomyces pombe (strain 972 / ATCC 24843) (Fission yeast) protein is DNA repair protein rhp26 (rhp26).